The primary structure comprises 261 residues: DNA repair protein RecO (261 aa).

The protein belongs to the RecO family.

Its function is as follows. Involved in DNA repair and RecF pathway recombination. The chain is DNA repair protein RecO from Limosilactobacillus reuteri (strain DSM 20016) (Lactobacillus reuteri).